Here is a 503-residue protein sequence, read N- to C-terminus: Maturase K (503 aa).

It belongs to the intron maturase 2 family. MatK subfamily.

Its subcellular location is the plastid. The protein resides in the chloroplast. Functionally, usually encoded in the trnK tRNA gene intron. Probably assists in splicing its own and other chloroplast group II introns. This chain is Maturase K, found in Vicia villosa (Hairy vetch).